A 178-amino-acid polypeptide reads, in one-letter code: High mobility group B protein 1 (178 aa).

Basic and acidic residues-rich tracts occupy residues 1–52 (MKTA…DPNK) and 101–118 (APYE…EKQM). 2 disordered regions span residues 1–59 (MKTA…APSA) and 75–178 (NPNV…EEED). The segment at residues 53-122 (PKRAPSAFFV…EYEKQMDAYN (70 aa)) is a DNA-binding region (HMG box). Phosphoserine is present on residues Ser137 and Ser146. Acidic residues predominate over residues 140–178 (NDEDEASGEEELLEKEAAGDDEEEEEEEDDDDDDDEEED).

Belongs to the HMGB family. In terms of tissue distribution, expressed in cotyledons, roots, stems, leaves and flowers (excluding pedicels).

Its subcellular location is the nucleus. Binds preferentially double-stranded DNA. Modulates general plant growth and stress tolerance. Confers sensitivity to salt and genotoxic (methyl methanesulfonate, MMS) stresses. This chain is High mobility group B protein 1 (HMGB1), found in Arabidopsis thaliana (Mouse-ear cress).